We begin with the raw amino-acid sequence, 564 residues long: Proline--tRNA ligase (564 aa).

This sequence belongs to the class-II aminoacyl-tRNA synthetase family. ProS type 1 subfamily. In terms of assembly, homodimer.

It is found in the cytoplasm. It carries out the reaction tRNA(Pro) + L-proline + ATP = L-prolyl-tRNA(Pro) + AMP + diphosphate. In terms of biological role, catalyzes the attachment of proline to tRNA(Pro) in a two-step reaction: proline is first activated by ATP to form Pro-AMP and then transferred to the acceptor end of tRNA(Pro). As ProRS can inadvertently accommodate and process non-cognate amino acids such as alanine and cysteine, to avoid such errors it has two additional distinct editing activities against alanine. One activity is designated as 'pretransfer' editing and involves the tRNA(Pro)-independent hydrolysis of activated Ala-AMP. The other activity is designated 'posttransfer' editing and involves deacylation of mischarged Ala-tRNA(Pro). The misacylated Cys-tRNA(Pro) is not edited by ProRS. This is Proline--tRNA ligase from Xanthomonas oryzae pv. oryzae (strain KACC10331 / KXO85).